Here is a 237-residue protein sequence, read N- to C-terminus: Uridylate kinase (237 aa).

Residue 11-14 (KLSG) participates in ATP binding. A UMP-binding site is contributed by Gly53. ATP-binding residues include Gly54 and Arg58. UMP-binding positions include Asp73 and 134–141 (TGNPFFTT). Thr161, Tyr167, and Asp170 together coordinate ATP.

The protein belongs to the UMP kinase family. In terms of assembly, homohexamer.

The protein localises to the cytoplasm. It carries out the reaction UMP + ATP = UDP + ADP. Its pathway is pyrimidine metabolism; CTP biosynthesis via de novo pathway; UDP from UMP (UMPK route): step 1/1. Inhibited by UTP. Catalyzes the reversible phosphorylation of UMP to UDP. The chain is Uridylate kinase from Burkholderia ambifaria (strain ATCC BAA-244 / DSM 16087 / CCUG 44356 / LMG 19182 / AMMD) (Burkholderia cepacia (strain AMMD)).